We begin with the raw amino-acid sequence, 55 residues long: Large ribosomal subunit protein bL33 (55 aa).

The protein belongs to the bacterial ribosomal protein bL33 family.

The polypeptide is Large ribosomal subunit protein bL33 (Paramagnetospirillum magneticum (strain ATCC 700264 / AMB-1) (Magnetospirillum magneticum)).